The following is a 122-amino-acid chain: Autophagy-related protein 8a (122 aa).

Residues 1-21 (MAKSSFKISNPLEARMSESSR) are disordered. Glycine 117 is lipidated: Phosphatidylethanolamine amidated glycine. Positions 118-122 (SLTVA) are cleaved as a propeptide — removed in mature form.

This sequence belongs to the ATG8 family. Interacts with ATG4B. Interacts with NBR1. Post-translationally, the C-terminal 5 residues are removed by ATG4 to expose Gly-117 at the C-terminus. This Gly-117 forms then a thioester bond with the 'Cys-558' of ATG7 (E1-like activating enzyme) before being transferred to the 'Cys-258' of ATG3 (the specific E2 conjugating enzyme), in order to be finally amidated with phosphatidylethanolamine. This lipid modification anchors ATG8 to autophagosomes. As to expression, constitutively expressed.

It is found in the cytoplasmic vesicle. It localises to the autophagosome membrane. Its subcellular location is the vacuole membrane. The protein resides in the cytoplasm. The protein localises to the cytoskeleton. In terms of biological role, ubiquitin-like modifier involved in autophagosomes formation. May mediate the delivery of the autophagosomes to the vacuole via the microtubule cytoskeleton. This chain is Autophagy-related protein 8a (ATG8A), found in Arabidopsis thaliana (Mouse-ear cress).